The sequence spans 671 residues: Alpha-1,4-glucan:maltose-1-phosphate maltosyltransferase (671 aa).

Alpha-maltose 1-phosphate is bound by residues K252, Q312, and D347. D382 acts as the Nucleophile in catalysis. N383 lines the alpha-maltose 1-phosphate pocket. E411 acts as the Proton donor in catalysis. An alpha-maltose 1-phosphate-binding site is contributed by 521–522; that stretch reads KY.

Belongs to the glycosyl hydrolase 13 family. GlgE subfamily. Homodimer.

It catalyses the reaction alpha-maltose 1-phosphate + [(1-&gt;4)-alpha-D-glucosyl](n) = [(1-&gt;4)-alpha-D-glucosyl](n+2) + phosphate. Functionally, maltosyltransferase that uses maltose 1-phosphate (M1P) as the sugar donor to elongate linear or branched alpha-(1-&gt;4)-glucans. Is involved in a branched alpha-glucan biosynthetic pathway from trehalose, together with TreS, Mak and GlgB. The sequence is that of Alpha-1,4-glucan:maltose-1-phosphate maltosyltransferase from Corynebacterium pseudotuberculosis (strain 1002).